The chain runs to 523 residues: Probable aminopeptidase NPEPL1 (523 aa).

Lysine 260 and aspartate 265 together coordinate Zn(2+). Lysine 272 is an active-site residue. Zn(2+) contacts are provided by aspartate 283, aspartate 342, and glutamate 344. Arginine 346 is a catalytic residue.

This sequence belongs to the peptidase M17 family. The cofactor is Zn(2+). Requires Mn(2+) as cofactor. In terms of tissue distribution, ubiquitously expressed.

In terms of biological role, probably catalyzes the removal of unsubstituted N-terminal amino acids from various peptides. This chain is Probable aminopeptidase NPEPL1 (NPEPL1), found in Homo sapiens (Human).